The sequence spans 318 residues: Ferric enterobactin-binding periplasmic protein FepB (318 aa).

An N-terminal signal peptide occupies residues 1–26; sequence MRLAPLYRNALLLTGLLLSGIAAVQA. Positions 48–318 constitute a Fe/B12 periplasmic-binding domain; it reads RIVSTSVTLT…QVLDRLKALF (271 aa).

This sequence belongs to the bacterial solute-binding protein 8 family. In terms of assembly, the complex is composed of two ATP-binding proteins (FepC), two transmembrane proteins (FepD and FepG) and a solute-binding protein (FepB).

Its subcellular location is the periplasm. Functionally, part of the ABC transporter complex FepBDGC involved in ferric enterobactin uptake. Binds ferric enterobactin. In Escherichia coli O6:H1 (strain CFT073 / ATCC 700928 / UPEC), this protein is Ferric enterobactin-binding periplasmic protein FepB (fepB).